The sequence spans 170 residues: AP-5 complex subunit sigma-1 (170 aa).

As to quaternary structure, probably part of the adaptor protein complex 5 (AP-5) a tetramer composed of AP5B1, AP5M1, AP5S1 and AP5Z1. Interacts with ZFYVE26 and SPG11.

Its subcellular location is the cytoplasm. The protein resides in the cytosol. The protein localises to the late endosome membrane. It is found in the lysosome membrane. In terms of biological role, as part of AP-5, a probable fifth adaptor protein complex it may be involved in endosomal transport. This chain is AP-5 complex subunit sigma-1 (Ap5s1), found in Mus musculus (Mouse).